A 1358-amino-acid polypeptide reads, in one-letter code: Nonribosomal peptide synthetase rstn8 (1358 aa).

Positions 1-23 are disordered; that stretch reads MSHSSHYSPVDSGMVPSSSSTED. Residues 261 to 659 are adenylation; it reads YRELDRLSSR…LGEVEYRLHQ (399 aa). One can recognise a Carrier domain in the interval 795–872; it reads ETVSPAESTL…DQASLVRPLV (78 aa). S832 is subject to O-(pantetheine 4'-phosphoryl)serine. Residues 909 to 1322 are condensation; that stretch reads EDIYPCTPLQ…DDYSQALHEL (414 aa).

Belongs to the NRP synthetase family. The cofactor is pantetheine 4'-phosphate.

It catalyses the reaction restrictinol + glycine + H(+) = restricticin + H2O. The protein operates within antifungal biosynthesis. In terms of biological role, nonribosomal peptide synthetase; part of the gene cluster that mediates the biosynthesis of the tetrahydropyranyl antifungal agent restricticin that acts as an inhibitor of CYP51 and blocks the ergosterol biosynthesis. Within the pathway, rstn8 catalyzes the C3 esterification of restrictinol with glycine to yield restricticin. Rstn8 represents an example of the emerging class of single-module NRPS-like enzymes that perform esterification reactions. Rstn8 displays strict substrate specificity toward glycine as no other natural amino acid is accepted. Rstn8 does not recognize desmethylrestrictinol as a substrate, demonstrating that rstn1-catalyzed methylation, possibly protecting the C4-OH, must precede the final esterification step. The highly reducing polyketide synthase rstn3, the short chain dehydrogenase rstn4, the cyclase rstn5, the FAD-dependent monooxygenase rstn6 and the enoylreductase rstn7 are required to generate the first stable intermediate desmethylrestrictinol. Rstn3 with rstn7 biosynthesize the first polyketide chain intermediate that is reduced by rstn4, followed by epoxidation by rstn6 before 6-endo cyclization via epoxide opening by rstn5 leads to desmethylrestrictinol. The methyltransferase rstn1 then catalyzes the C4 O-methylation of desmethylrestrictinol to produce restrictinol, and the nonribosomal peptide synthetase rstn8 catalyzes the C3 esterification of restrictinol with glycine that leads to restricticin. In Aspergillus nomiae NRRL (strain ATCC 15546 / NRRL 13137 / CBS 260.88 / M93), this protein is Nonribosomal peptide synthetase rstn8.